A 759-amino-acid polypeptide reads, in one-letter code: ARF GTPase-activating protein GIT2 (759 aa).

An Arf-GAP domain is found at Met-1–Asp-124. A C4-type zinc finger spans residues Cys-11–Cys-34. ANK repeat units follow at residues Asp-132–Phe-161, Lys-166–Ser-198, and Ser-199–Asp-228. 2 disordered regions span residues Val-376–Asp-422 and Gln-469–Glu-641. The segment covering Gln-385–Asp-402 has biased composition (acidic residues). The stretch at Asn-451 to Gln-478 forms a coiled coil. The span at Gln-469–Ala-489 shows a compositional bias: polar residues. Residues Thr-555 to Trp-569 show a composition bias toward low complexity. The segment covering Ser-570–Lys-583 has biased composition (basic and acidic residues).

In terms of assembly, may form heterooligomers with GIT1. Directly interacts with protein Piccolo/PCLO. Interacts with PPFIA1 and PPFIA2. Interacts with ARHGEF7. Identified in a complex with ARHGEF6 and BIN2. Interacts with PAK3. Interacts with PXN/paxillin. Interacts with TGFB1I1. Forms a complex with EFNB1 and GRB4/NCK2.

GTPase-activating protein for ADP ribosylation factor family members, including ARF1. In Rattus norvegicus (Rat), this protein is ARF GTPase-activating protein GIT2 (Git2).